Reading from the N-terminus, the 351-residue chain is DNA beta-glucosyltransferase (351 aa).

As to quaternary structure, monomer.

It carries out the reaction Transfers a beta-D-glucosyl residue from UDP-alpha-D-glucose to a hydroxymethylcytosine residue in DNA.. Its pathway is genetic information processing; DNA modification. Catalyzes the transfer of glucose from uridine diphosphoglucose to 5-hydroxymethyl cytosine of T4 DNA to yield glucosyl 5-hydroxymethyl cytosine (glc-HMC). This DNA process seems to occur immediately after DNA synthesis since the DNA alpha-glucosyltransferase interacts with the clamp protein gp45. The glc-HMC modification protects the phage genome against its own nucleases and the host restriction endonuclease system. The glc-HMC modification also protects against the host CRISPR-Cas9 defense system. The polypeptide is DNA beta-glucosyltransferase (bgt) (Enterobacteria phage T4 (Bacteriophage T4)).